Consider the following 299-residue polypeptide: UDP-N-acetylenolpyruvoylglucosamine reductase (299 aa).

The FAD-binding PCMH-type domain occupies 27-192; the sequence is KSGGAADWLF…VGATFRGRPG (166 aa). The active site involves Arg-172. The tract at residues 206–225 is disordered; it reads ASREASQPLRSRTGGSTFKN. Positions 208–224 are enriched in polar residues; sequence REASQPLRSRTGGSTFK. Ser-221 (proton donor) is an active-site residue. Glu-291 is a catalytic residue.

The protein belongs to the MurB family. It depends on FAD as a cofactor.

The protein resides in the cytoplasm. The catalysed reaction is UDP-N-acetyl-alpha-D-muramate + NADP(+) = UDP-N-acetyl-3-O-(1-carboxyvinyl)-alpha-D-glucosamine + NADPH + H(+). It functions in the pathway cell wall biogenesis; peptidoglycan biosynthesis. Functionally, cell wall formation. This Sphingopyxis alaskensis (strain DSM 13593 / LMG 18877 / RB2256) (Sphingomonas alaskensis) protein is UDP-N-acetylenolpyruvoylglucosamine reductase.